A 475-amino-acid chain; its full sequence is MLVQYQNLPVQNIPVLLLSCGFLAILFRSLVLRVRYYRKAQAWGCKPVPSRFQWDPFWGLDLVWSQWKALRGHYYIPWLSDLHKGQPKTFQITFQGARVIHTIEPENLKCLTAINWKDFGISPLRRGKKAGHPFADRGVNSVDGEDWVFSRSLIKPFFMREVYANTERLLPHTDHLLRIMPPDGETFNIQPYLQRWFLDVTTQFIFGAPMDALTHPERARVTWAMLDVLRGTRLRLQLYRVMHLIDWSWWLRAIKIIHEFMDERIDRVYADIAEHQKRIQAGEDVGPERLDLLWHMALGCPDHVELRSQLSLLFVPNNDTTSILTANVIWHLARNSKAWGKVRAEVLAHGDAPLTFEALRGMKYLQASINETHRLNPNNVTQVRMCVNDTTLPLGGGTDGRSPILIRKGDIVQVTKTVMQKDPLYWGEDPDVYRPERFEEKTHFWEFVPFGGGPRRCPAHMMVQTESAYLIARLA.

Residues 10-32 (VQNIPVLLLSCGFLAILFRSLVL) traverse the membrane as a helical segment. C457 is a binding site for heme.

The protein belongs to the cytochrome P450 family. The cofactor is heme.

Its subcellular location is the membrane. It functions in the pathway secondary metabolite biosynthesis. Functionally, cytochrome P450 monooxygenase; part of the gene cluster that mediates the biosynthesis of oxopyrrolidines, polyketide-amino acid hybrid compounds with feature structures of tetramic acid. Does not seem to play a role in oxopyrrolidines A and B biosynthesis. May be involved in further modifications of these oxopyrrolidines. This Penicillium oxalicum (strain 114-2 / CGMCC 5302) (Penicillium decumbens) protein is Cytochrome P450 monooxygenase opdE.